The following is a 269-amino-acid chain: Signal recognition particle receptor subunit beta (269 aa).

The chain crosses the membrane as a helical span at residues 35-55; sequence LLSVAVALLAVLLTLVFWKFI. GTP is bound by residues 69-77 and 90-93; these read GLCDSGKTL and TQTS. A Phosphoserine modification is found at S110. Residues G118 and 178–181 each bind GTP; that span reads NKQD. The residue at position 212 (T212) is a Phosphothreonine. GTP is bound at residue A246.

Belongs to the SRP receptor beta subunit family. In terms of assembly, heterodimer with SRPRA.

It is found in the endoplasmic reticulum membrane. Functionally, component of the SRP (signal recognition particle) receptor. Ensures, in conjunction with the signal recognition particle, the correct targeting of the nascent secretory proteins to the endoplasmic reticulum membrane system. May mediate the membrane association of SR. The polypeptide is Signal recognition particle receptor subunit beta (Srprb) (Mus musculus (Mouse)).